Reading from the N-terminus, the 689-residue chain is Glycine--tRNA ligase beta subunit (689 aa).

This sequence belongs to the class-II aminoacyl-tRNA synthetase family. As to quaternary structure, tetramer of two alpha and two beta subunits.

Its subcellular location is the cytoplasm. The enzyme catalyses tRNA(Gly) + glycine + ATP = glycyl-tRNA(Gly) + AMP + diphosphate. The polypeptide is Glycine--tRNA ligase beta subunit (Lacticaseibacillus paracasei (strain ATCC 334 / BCRC 17002 / CCUG 31169 / CIP 107868 / KCTC 3260 / NRRL B-441) (Lactobacillus paracasei)).